Reading from the N-terminus, the 174-residue chain is Dual-action ribosomal maturation protein DarP (174 aa).

This sequence belongs to the DarP family.

It is found in the cytoplasm. Its function is as follows. Member of a network of 50S ribosomal subunit biogenesis factors which assembles along the 30S-50S interface, preventing incorrect 23S rRNA structures from forming. Promotes peptidyl transferase center (PTC) maturation. In Vibrio campbellii (strain ATCC BAA-1116), this protein is Dual-action ribosomal maturation protein DarP.